The sequence spans 207 residues: Large ribosomal subunit protein uL4 (207 aa).

The interval 48–75 is disordered; it reads THAVKNRSAVSGGGRKPWKQKGTGRARA.

Belongs to the universal ribosomal protein uL4 family. In terms of assembly, part of the 50S ribosomal subunit.

One of the primary rRNA binding proteins, this protein initially binds near the 5'-end of the 23S rRNA. It is important during the early stages of 50S assembly. It makes multiple contacts with different domains of the 23S rRNA in the assembled 50S subunit and ribosome. Functionally, forms part of the polypeptide exit tunnel. This Leuconostoc citreum (strain KM20) protein is Large ribosomal subunit protein uL4.